Here is a 1342-residue protein sequence, read N- to C-terminus: DNA-directed RNA polymerase subunit beta (1342 aa).

This sequence belongs to the RNA polymerase beta chain family. In terms of assembly, the RNAP catalytic core consists of 2 alpha, 1 beta, 1 beta' and 1 omega subunit. When a sigma factor is associated with the core the holoenzyme is formed, which can initiate transcription.

The enzyme catalyses RNA(n) + a ribonucleoside 5'-triphosphate = RNA(n+1) + diphosphate. DNA-dependent RNA polymerase catalyzes the transcription of DNA into RNA using the four ribonucleoside triphosphates as substrates. The sequence is that of DNA-directed RNA polymerase subunit beta from Colwellia psychrerythraea (strain 34H / ATCC BAA-681) (Vibrio psychroerythus).